The chain runs to 422 residues: MLDYKFIKENVEAVKQNIKNRHMNADADKAVELYDKRTALVTSLQNLQKDRNDNSQSMKQKLSPEERQKLVDQGKAIKEKIAQVEAELAEAEKALHEAVSKIPNMAHPEAPVGKEDSDNLEVKRCGTVPKFDFEPKDHVQLGQDLDLIDFEAGTKVSGVKFYFLKNEAVFLEQALTMYGLNILRKHGFKPFITPDIAKEEILYGIGFNPRGEESNVYSLEGEGTCLVATAEITLGGYHSDEIIKKESLPLKYCGLSHCFRREAGAAGQFSKGLYRVHQFSKLEMFVYCTPEESDALHEELRLIEEEIFNGLGIPFRVVDTCTGDLGAPAYRKWDLEAWMPGRNGGEWGEVTSTSNCTDYQARRLNIRYKDDDGKNKFLHTLNGTALAMSRAMIAVLENYQQADGSIKIPEALVPYCGFDRIG.

229-231 (TAE) lines the L-serine pocket. ATP-binding positions include 260–262 (RRE) and Val276. Glu283 serves as a coordination point for L-serine. 349–352 (EVTS) is an ATP binding site. Thr384 provides a ligand contact to L-serine.

Belongs to the class-II aminoacyl-tRNA synthetase family. Type-1 seryl-tRNA synthetase subfamily. In terms of assembly, homodimer. The tRNA molecule binds across the dimer.

It is found in the cytoplasm. It catalyses the reaction tRNA(Ser) + L-serine + ATP = L-seryl-tRNA(Ser) + AMP + diphosphate + H(+). It carries out the reaction tRNA(Sec) + L-serine + ATP = L-seryl-tRNA(Sec) + AMP + diphosphate + H(+). The protein operates within aminoacyl-tRNA biosynthesis; selenocysteinyl-tRNA(Sec) biosynthesis; L-seryl-tRNA(Sec) from L-serine and tRNA(Sec): step 1/1. In terms of biological role, catalyzes the attachment of serine to tRNA(Ser). Is also able to aminoacylate tRNA(Sec) with serine, to form the misacylated tRNA L-seryl-tRNA(Sec), which will be further converted into selenocysteinyl-tRNA(Sec). The protein is Serine--tRNA ligase of Treponema denticola (strain ATCC 35405 / DSM 14222 / CIP 103919 / JCM 8153 / KCTC 15104).